The sequence spans 398 residues: CCA-adding enzyme (398 aa).

ATP is bound by residues Gly32 and Arg35. Residues Gly32 and Arg35 each coordinate CTP. Residues Asp45 and Asp47 each contribute to the Mg(2+) site. ATP-binding residues include Arg116, Asp159, Arg162, Arg165, and Arg168. Arg116, Asp159, Arg162, Arg165, and Arg168 together coordinate CTP.

Belongs to the tRNA nucleotidyltransferase/poly(A) polymerase family. Bacterial CCA-adding enzyme type 3 subfamily. Homodimer. It depends on Mg(2+) as a cofactor.

The catalysed reaction is a tRNA precursor + 2 CTP + ATP = a tRNA with a 3' CCA end + 3 diphosphate. The enzyme catalyses a tRNA with a 3' CCA end + 2 CTP + ATP = a tRNA with a 3' CCACCA end + 3 diphosphate. Catalyzes the addition and repair of the essential 3'-terminal CCA sequence in tRNAs without using a nucleic acid template. Adds these three nucleotides in the order of C, C, and A to the tRNA nucleotide-73, using CTP and ATP as substrates and producing inorganic pyrophosphate. tRNA 3'-terminal CCA addition is required both for tRNA processing and repair. Also involved in tRNA surveillance by mediating tandem CCA addition to generate a CCACCA at the 3' terminus of unstable tRNAs. While stable tRNAs receive only 3'-terminal CCA, unstable tRNAs are marked with CCACCA and rapidly degraded. The sequence is that of CCA-adding enzyme from Lactobacillus johnsonii (strain CNCM I-12250 / La1 / NCC 533).